The following is a 275-amino-acid chain: Release factor glutamine methyltransferase (275 aa).

S-adenosyl-L-methionine-binding positions include 114–118 (GTGSG), Asp-137, Trp-165, and Asn-180. 180-183 (NPPY) is a binding site for substrate.

It belongs to the protein N5-glutamine methyltransferase family. PrmC subfamily.

It carries out the reaction L-glutaminyl-[peptide chain release factor] + S-adenosyl-L-methionine = N(5)-methyl-L-glutaminyl-[peptide chain release factor] + S-adenosyl-L-homocysteine + H(+). In terms of biological role, methylates the class 1 translation termination release factors RF1/PrfA and RF2/PrfB on the glutamine residue of the universally conserved GGQ motif. The protein is Release factor glutamine methyltransferase of Xylella fastidiosa (strain Temecula1 / ATCC 700964).